The chain runs to 1035 residues: Cell-division control histidine kinase PdhS (1035 aa).

Positions 1 to 613 (MSGSYPFIDI…HADGSEEPVD (613 aa)) are important for polar localization. The tract at residues 500-533 (QGLANTRAESETPVSETSSIEPVEPTPPVKTRSE) is disordered. An interaction with DivK region spans residues 614-1035 (AHLNAIAWRG…VFPPTRVLAD (422 aa)). In terms of domain architecture, PAS spans 659-730 (HVEELKTILD…YLHGLSGNGV (72 aa)). The Histidine kinase domain occupies 802–1031 (RISHEIRTPL…VVEIVFPPTR (230 aa)). The residue at position 805 (His-805) is a Phosphohistidine; by autocatalysis.

As to quaternary structure, interacts with DivK.

Its subcellular location is the cytoplasm. The enzyme catalyses ATP + protein L-histidine = ADP + protein N-phospho-L-histidine.. Its function is as follows. Functions as a polar differentiation marker. Essential protein that, by localizing in the old pole of dividing cells, controls cell division and maturation, probably through control of DivK phosphorylation status and cellular distribution, which in turn regulates CtrA, a transcriptional regulator of the minB operon. The asymmetrical localization of this protein is probably required for cells to enter a new division cycle. The protein is Cell-division control histidine kinase PdhS (pdhS) of Brucella melitensis biotype 1 (strain ATCC 23456 / CCUG 17765 / NCTC 10094 / 16M).